Here is a 128-residue protein sequence, read N- to C-terminus: Fluoride-specific ion channel FluC (128 aa).

The next 4 helical transmembrane spans lie at 3 to 23 (FSVI…RFLI), 34 to 54 (LFPV…GFLY), 69 to 89 (FITG…ETLL), and 100 to 120 (FLNI…AIIL). The Na(+) site is built by G75 and T78.

It belongs to the fluoride channel Fluc/FEX (TC 1.A.43) family.

It is found in the cell inner membrane. The enzyme catalyses fluoride(in) = fluoride(out). Na(+) is not transported, but it plays an essential structural role and its presence is essential for fluoride channel function. Fluoride-specific ion channel. Important for reducing fluoride concentration in the cell, thus reducing its toxicity. This Nitratiruptor sp. (strain SB155-2) protein is Fluoride-specific ion channel FluC.